Here is a 147-residue protein sequence, read N- to C-terminus: 3-dehydroquinate dehydratase (147 aa).

Tyr-23 (proton acceptor) is an active-site residue. 3 residues coordinate substrate: Asn-74, His-80, and Asp-87. The active-site Proton donor is His-100. Residues 101 to 102 (LS) and Arg-111 each bind substrate.

The protein belongs to the type-II 3-dehydroquinase family. In terms of assembly, homododecamer.

It carries out the reaction 3-dehydroquinate = 3-dehydroshikimate + H2O. Its pathway is metabolic intermediate biosynthesis; chorismate biosynthesis; chorismate from D-erythrose 4-phosphate and phosphoenolpyruvate: step 3/7. In terms of biological role, catalyzes a trans-dehydration via an enolate intermediate. This Clostridium botulinum (strain Okra / Type B1) protein is 3-dehydroquinate dehydratase.